The sequence spans 149 residues: Large ribosomal subunit protein bL9 (149 aa).

This sequence belongs to the bacterial ribosomal protein bL9 family.

Binds to the 23S rRNA. The sequence is that of Large ribosomal subunit protein bL9 from Helicobacter pylori (strain ATCC 700392 / 26695) (Campylobacter pylori).